The sequence spans 542 residues: Chaperonin GroEL 2 (542 aa).

ATP is bound by residues 30-33 (TLGP), Lys-51, 87-91 (DGTTT), Gly-415, and Asp-496.

The protein belongs to the chaperonin (HSP60) family. As to quaternary structure, forms a cylinder of 14 subunits composed of two heptameric rings stacked back-to-back. Interacts with the co-chaperonin GroES.

The protein localises to the cytoplasm. It catalyses the reaction ATP + H2O + a folded polypeptide = ADP + phosphate + an unfolded polypeptide.. Its function is as follows. Together with its co-chaperonin GroES, plays an essential role in assisting protein folding. The GroEL-GroES system forms a nano-cage that allows encapsulation of the non-native substrate proteins and provides a physical environment optimized to promote and accelerate protein folding. The protein is Chaperonin GroEL 2 of Rhizobium etli (strain ATCC 51251 / DSM 11541 / JCM 21823 / NBRC 15573 / CFN 42).